A 494-amino-acid polypeptide reads, in one-letter code: Cytochrome P450 2A7 (494 aa).

Cys439 lines the heme pocket.

It belongs to the cytochrome P450 family. Heme serves as cofactor.

It is found in the endoplasmic reticulum membrane. Its subcellular location is the microsome membrane. It catalyses the reaction an organic molecule + reduced [NADPH--hemoprotein reductase] + O2 = an alcohol + oxidized [NADPH--hemoprotein reductase] + H2O + H(+). Functionally, cytochromes P450 are a group of heme-thiolate monooxygenases. In liver microsomes, this enzyme is involved in an NADPH-dependent electron transport pathway. It oxidizes a variety of structurally unrelated compounds, including steroids, fatty acids, and xenobiotics. In Homo sapiens (Human), this protein is Cytochrome P450 2A7 (CYP2A7).